The primary structure comprises 399 residues: S-adenosylmethionine synthase (399 aa).

Histidine 17 provides a ligand contact to ATP. Residue aspartate 19 coordinates Mg(2+). Glutamate 45 provides a ligand contact to K(+). Positions 58 and 101 each coordinate L-methionine. The segment at glutamine 101 to glutamine 111 is flexible loop. Residues aspartate 177–lysine 179, arginine 244–phenylalanine 245, aspartate 253, arginine 259–lysine 260, alanine 276, and lysine 280 contribute to the ATP site. Aspartate 253 provides a ligand contact to L-methionine. Lysine 284 contributes to the L-methionine binding site.

This sequence belongs to the AdoMet synthase family. As to quaternary structure, homotetramer; dimer of dimers. The cofactor is Mg(2+). It depends on K(+) as a cofactor.

The protein localises to the cytoplasm. It catalyses the reaction L-methionine + ATP + H2O = S-adenosyl-L-methionine + phosphate + diphosphate. Its pathway is amino-acid biosynthesis; S-adenosyl-L-methionine biosynthesis; S-adenosyl-L-methionine from L-methionine: step 1/1. Functionally, catalyzes the formation of S-adenosylmethionine (AdoMet) from methionine and ATP. The overall synthetic reaction is composed of two sequential steps, AdoMet formation and the subsequent tripolyphosphate hydrolysis which occurs prior to release of AdoMet from the enzyme. In Bacillus cereus (strain B4264), this protein is S-adenosylmethionine synthase.